The following is a 396-amino-acid chain: tRNA (guanine-N(7)-)-methyltransferase non-catalytic subunit wuho (396 aa).

WD repeat units lie at residues 75–115 (KVEV…AQLL), 162–201 (GHLSIVYDVLWSEDQQYIITCDRDDKIRVTNYPATFDIHS), 205–243 (GHKEFVSGLAMLTEQHIISASGDKTLRVWNYTCGKELLL), and 302–342 (AGTW…RASG).

Belongs to the WD repeat TRM82 family. In terms of assembly, forms a heterodimer with the catalytic subunit Mettl1. Interacts with mei-P26 and weakly interacts with bgcn; required for the function or formation of the mei-P26-bgcn-bam-sxl complex. Interacts with nanos; may be involved in mei-P26-dependent derepression of the BMP signaling pathway. Interacts with Myc; the interaction may be mediated by mei-P26 and may be involved in the regulation of ribosome biogenesis. In testis, it is present at high level in hub cells, a niche for germline stem cells of testis. Ubiquitously expressed in all testicular cells throughout spermatogenesis. Ubiquitously expressed in all germline and somatic cells of the ovary.

The protein resides in the nucleus. Its subcellular location is the cytoplasm. The protein operates within tRNA modification; N(7)-methylguanine-tRNA biosynthesis. Required for the Mettl1-dependent formation of N(7)-methylguanine at position 46 (m7G46) in tRNA. In the Mettl1-wuho methyltransferase complex, it is required to stabilize and induce conformational changes of the catalytic subunit. Required for binding of nanos mRNA and repression of translation by the mei-P26-bgcn-bam-sxl complex. May cooperate with mei-P26 and nanos to derepress the BMP signaling pathway. May cooperate with mei-P26 to suppress expression of a subset of microRNAs. May cooperate with mei-P26 to regulate bam expression levels in germline cells during gametogenesis. Required to promote mitosis to meiosis transition during gametogenesis. May regulate germline cell division in part by regulating ribosome biogenesis. This Drosophila pseudoobscura pseudoobscura (Fruit fly) protein is tRNA (guanine-N(7)-)-methyltransferase non-catalytic subunit wuho.